We begin with the raw amino-acid sequence, 351 residues long: MLYSLLKKYLFSLDAEDAHEKVCKILRMLSSSPFLCGLIDSQWGYKNPKLENEILGLHFPNPLGLAAGFDKNISMLRALIAFGFGYLEAGTLTNEAQVGNERPRLFRHIEEESLQNAMGFNNHGAILAARSFNRFAPYKTPIGINLGKNKRIEQVHALEDYKAVLNKCLNIGDYYTFNLSSPNTPNLRDLQNKAFVNELFCMAKEMTHKPLFLKIAPDLEIDDMLEVVNSAIEAGAHGIIATNTTIDKSLVFAPKEMGGLSGKCLTKKSREIFKELAKAFFNKSVLVSVGGISDAKEAYERIKMGASLLQIYSAFIYNGPNLCQNILKDLVKLLQKDGFLSVKEAIGADLR.

FMN contacts are provided by residues 67-71 (AGFDK) and Thr-91. Substrate is bound at residue Lys-71. Residue 116–120 (NAMGF) participates in substrate binding. FMN-binding residues include Asn-145 and Asn-178. Asn-178 provides a ligand contact to substrate. The active-site Nucleophile is Ser-181. Substrate is bound at residue Asn-183. Lys-214 and Thr-242 together coordinate FMN. 243 to 244 (NT) is a substrate binding site. FMN is bound by residues Gly-262, Gly-291, and 312-313 (YS).

It belongs to the dihydroorotate dehydrogenase family. Type 2 subfamily. As to quaternary structure, monomer. FMN serves as cofactor.

Its subcellular location is the cell membrane. It carries out the reaction (S)-dihydroorotate + a quinone = orotate + a quinol. It participates in pyrimidine metabolism; UMP biosynthesis via de novo pathway; orotate from (S)-dihydroorotate (quinone route): step 1/1. Its function is as follows. Catalyzes the conversion of dihydroorotate to orotate with quinone as electron acceptor. The chain is Dihydroorotate dehydrogenase (quinone) from Helicobacter pylori (strain Shi470).